A 382-amino-acid polypeptide reads, in one-letter code: D-galactonate dehydratase (382 aa).

D183 is a Mg(2+) binding site. H185 serves as the catalytic Proton donor. Residues E209 and E235 each coordinate Mg(2+). H285 functions as the Proton acceptor in the catalytic mechanism.

Belongs to the mandelate racemase/muconate lactonizing enzyme family. GalD subfamily. Requires Mg(2+) as cofactor.

It carries out the reaction D-galactonate = 2-dehydro-3-deoxy-D-galactonate + H2O. It participates in carbohydrate acid metabolism; D-galactonate degradation; D-glyceraldehyde 3-phosphate and pyruvate from D-galactonate: step 1/3. In terms of biological role, catalyzes the dehydration of D-galactonate to 2-keto-3-deoxy-D-galactonate. This Pectobacterium atrosepticum (strain SCRI 1043 / ATCC BAA-672) (Erwinia carotovora subsp. atroseptica) protein is D-galactonate dehydratase.